The chain runs to 355 residues: Peptide chain release factor 1 (355 aa).

Position 233 is an N5-methylglutamine (Q233).

This sequence belongs to the prokaryotic/mitochondrial release factor family. Methylated by PrmC. Methylation increases the termination efficiency of RF1.

It localises to the cytoplasm. In terms of biological role, peptide chain release factor 1 directs the termination of translation in response to the peptide chain termination codons UAG and UAA. The polypeptide is Peptide chain release factor 1 (Desulfitobacterium hafniense (strain DSM 10664 / DCB-2)).